The chain runs to 410 residues: Toluene 1,2-dioxygenase system ferredoxin--NAD(+) reductase component (410 aa).

4-35 (HVAIIGNGVGGFTTAQALRAEGFEGRISLIGD) contributes to the FAD binding site. 145–173 (RLLIVGGGLIGCEVATTARKLGLSVTILE) contacts NAD(+).

The protein belongs to the bacterial ring-hydroxylating dioxygenase ferredoxin reductase family. In terms of assembly, this dioxygenase system consists of four proteins: the two subunits of the hydroxylase component (todC1 and todC2), a ferredoxin (TodB) and a ferredoxin reductase (TodA). The cofactor is FAD.

The catalysed reaction is 2 reduced [2Fe-2S]-[ferredoxin] + NAD(+) + H(+) = 2 oxidized [2Fe-2S]-[ferredoxin] + NADH. It functions in the pathway xenobiotic degradation; toluene degradation. In terms of biological role, part of the electron transfer component of toluene 1,2-dioxygenase, transfers electrons from ferredoxin (TodB) to NADH. The polypeptide is Toluene 1,2-dioxygenase system ferredoxin--NAD(+) reductase component (todA) (Pseudomonas putida (strain ATCC 700007 / DSM 6899 / JCM 31910 / BCRC 17059 / LMG 24140 / F1)).